A 120-amino-acid polypeptide reads, in one-letter code: Large ribosomal subunit protein bL19c (120 aa).

The protein belongs to the bacterial ribosomal protein bL19 family.

Its subcellular location is the plastid. It is found in the chloroplast. In Phaeodactylum tricornutum (strain CCAP 1055/1), this protein is Large ribosomal subunit protein bL19c.